The chain runs to 436 residues: Enolase (436 aa).

Glutamine 167 is a binding site for (2R)-2-phosphoglycerate. Glutamate 209 serves as the catalytic Proton donor. Aspartate 246, glutamate 291, and aspartate 318 together coordinate Mg(2+). Residues lysine 343, arginine 372, serine 373, and lysine 394 each coordinate (2R)-2-phosphoglycerate. Lysine 343 acts as the Proton acceptor in catalysis.

This sequence belongs to the enolase family. In terms of assembly, component of the RNA degradosome, a multiprotein complex involved in RNA processing and mRNA degradation. Requires Mg(2+) as cofactor.

The protein resides in the cytoplasm. The protein localises to the secreted. It localises to the cell surface. It carries out the reaction (2R)-2-phosphoglycerate = phosphoenolpyruvate + H2O. The protein operates within carbohydrate degradation; glycolysis; pyruvate from D-glyceraldehyde 3-phosphate: step 4/5. Catalyzes the reversible conversion of 2-phosphoglycerate (2-PG) into phosphoenolpyruvate (PEP). It is essential for the degradation of carbohydrates via glycolysis. The sequence is that of Enolase from Actinobacillus pleuropneumoniae serotype 3 (strain JL03).